Reading from the N-terminus, the 154-residue chain is Histone H2B.5 (154 aa).

Positions 1-25 (MAPKAEKKPAAKKVAEEEPSEKAAP) are enriched in basic and acidic residues. A disordered region spans residues 1-62 (MAPKAEKKPA…DKKGRKKAKK (62 aa)). N6-acetyllysine occurs at positions 7 and 39. Lysine 150 participates in a covalent cross-link: Glycyl lysine isopeptide (Lys-Gly) (interchain with G-Cter in ubiquitin).

The protein belongs to the histone H2B family. The nucleosome is a histone octamer containing two molecules each of H2A, H2B, H3 and H4 assembled in one H3-H4 heterotetramer and two H2A-H2B heterodimers. The octamer wraps approximately 147 bp of DNA. In terms of processing, can be acetylated to form H2BK6ac and H2BK33ac. Monoubiquitinated to form H2BK143ub1; may give a specific tag for epigenetic transcriptional activation.

Its subcellular location is the nucleus. It localises to the chromosome. In terms of biological role, core component of nucleosome. Nucleosomes wrap and compact DNA into chromatin, limiting DNA accessibility to the cellular machineries which require DNA as a template. Histones thereby play a central role in transcription regulation, DNA repair, DNA replication and chromosomal stability. DNA accessibility is regulated via a complex set of post-translational modifications of histones, also called histone code, and nucleosome remodeling. The chain is Histone H2B.5 from Zea mays (Maize).